We begin with the raw amino-acid sequence, 148 residues long: Nucleoside diphosphate kinase 1 (148 aa).

ATP is bound by residues Lys-9, Phe-57, Arg-85, Thr-91, Arg-102, and Asn-112. The active-site Pros-phosphohistidine intermediate is the His-115.

This sequence belongs to the NDK family. Mg(2+) serves as cofactor. Post-translationally, the N-terminus is blocked.

It carries out the reaction a 2'-deoxyribonucleoside 5'-diphosphate + ATP = a 2'-deoxyribonucleoside 5'-triphosphate + ADP. The catalysed reaction is a ribonucleoside 5'-diphosphate + ATP = a ribonucleoside 5'-triphosphate + ADP. In terms of biological role, major role in the synthesis of nucleoside triphosphates other than ATP. The ATP gamma phosphate is transferred to the NDP beta phosphate via a ping-pong mechanism, using a phosphorylated active-site intermediate. The chain is Nucleoside diphosphate kinase 1 (NDPK1) from Spinacia oleracea (Spinach).